The sequence spans 235 residues: Small ribosomal subunit protein uS2 (235 aa).

It belongs to the universal ribosomal protein uS2 family.

This chain is Small ribosomal subunit protein uS2, found in Geobacillus sp. (strain WCH70).